Consider the following 190-residue polypeptide: Peptide methionine sulfoxide reductase A2-2 (190 aa).

Residues 1–20 (MSNDTGADGGAANPDLGPDA) are disordered. Low complexity predominate over residues 10–20 (GAANPDLGPDA).

Belongs to the MsrA Met sulfoxide reductase family.

Its subcellular location is the cytoplasm. The protein resides in the cytosol. The enzyme catalyses L-methionyl-[protein] + [thioredoxin]-disulfide + H2O = L-methionyl-(S)-S-oxide-[protein] + [thioredoxin]-dithiol. The catalysed reaction is [thioredoxin]-disulfide + L-methionine + H2O = L-methionine (S)-S-oxide + [thioredoxin]-dithiol. Its function is as follows. Catalyzes the reduction of methionine sulfoxide (MetSO) to methionine in proteins. Plays a protective role against oxidative stress by restoring activity to proteins that have been inactivated by methionine oxidation. MSRA family specifically reduces the MetSO S-enantiomer. The protein is Peptide methionine sulfoxide reductase A2-2 (MSRA2-2) of Oryza sativa subsp. japonica (Rice).